A 245-amino-acid chain; its full sequence is uncharacterized protein (245 aa).

The next 4 helical transmembrane spans lie at 10–30, 94–114, 134–154, and 196–216; these read FYTL…SPWY, TLAF…YVHI, VLIG…FLII, and RGWI…IYCW.

It localises to the membrane. This is an uncharacterized protein from Dictyostelium discoideum (Social amoeba).